Consider the following 292-residue polypeptide: Peroxisomal 2,4-dienoyl-CoA reductase [(3E)-enoyl-CoA-producing] (292 aa).

Alanine 2 is subject to N-acetylalanine. Residues 35-40, 60-64, and aspartate 86 each bind NADP(+); these read GGGSGI and RSLPR. Arginine 60 is a binding site for substrate. Substrate-binding positions include arginine 88, phenylalanine 118, and 126-128; that span reads SFN. Lysine 151 is modified (N6-acetyllysine). NADP(+)-binding positions include lysine 182 and 208 to 214; that span reads PGPISGT. Residue arginine 219 participates in substrate binding. Serine 287 is modified (phosphoserine). The Microbody targeting signal motif lies at 290–292; sequence AKL. At lysine 291 the chain carries N6-acetyllysine.

Belongs to the short-chain dehydrogenases/reductases (SDR) family. 2,4-dienoyl-CoA reductase subfamily. In terms of assembly, monomer, dimer and oligomer.

Its subcellular location is the peroxisome. The enzyme catalyses a (2E,4Z)-dienoyl-CoA + NADPH + H(+) = a 4,5-saturated-(3E)-enoyl-CoA + NADP(+). It carries out the reaction a (2E,4E)-dienoyl-CoA + NADPH + H(+) = a 4,5-saturated-(3E)-enoyl-CoA + NADP(+). It catalyses the reaction (2E,4E)-hexadienoyl-CoA + NADPH + H(+) = (3E)-hexenoyl-CoA + NADP(+). The catalysed reaction is (2E,4E)-decadienoyl-CoA + NADPH + H(+) = (3E)-decenoyl-CoA + NADP(+). The enzyme catalyses (2E,4Z,7Z,10Z,13Z,16Z,19Z)-docosaheptaenoyl-CoA + NADPH + H(+) = (3E,7Z,10Z,13Z,16Z,19Z)-docosahexaenoyl-CoA + NADP(+). Auxiliary enzyme of beta-oxidation. Participates in the degradation of unsaturated fatty enoyl-CoA esters having double bonds in both even- and odd-numbered positions in peroxisome. Catalyzes the NADP-dependent reduction of 2,4-dienoyl-CoA to yield trans-3-enoyl-CoA. Has activity towards short and medium chain 2,4-dienoyl-CoAs, but also towards 2,4,7,10,13,16,19-docosaheptaenoyl-CoA, suggesting that it does not constitute a rate limiting step in the peroxisomal degradation of docosahexaenoic acid. The protein is Peroxisomal 2,4-dienoyl-CoA reductase [(3E)-enoyl-CoA-producing] (DECR2) of Pongo abelii (Sumatran orangutan).